The chain runs to 161 residues: Ureidoglycolate lyase (161 aa).

It belongs to the ureidoglycolate lyase family. As to quaternary structure, homodimer. Requires Ni(2+) as cofactor.

The enzyme catalyses (S)-ureidoglycolate = urea + glyoxylate. The protein operates within nitrogen metabolism; (S)-allantoin degradation. Catalyzes the catabolism of the allantoin degradation intermediate (S)-ureidoglycolate, generating urea and glyoxylate. Involved in the utilization of allantoin as nitrogen source. The chain is Ureidoglycolate lyase from Rhodobacter capsulatus (strain ATCC BAA-309 / NBRC 16581 / SB1003).